A 552-amino-acid chain; its full sequence is Arginine--tRNA ligase (552 aa).

Positions 123 to 133 (ANPTGPLTIGR) match the 'HIGH' region motif.

It belongs to the class-I aminoacyl-tRNA synthetase family. In terms of assembly, monomer.

The protein resides in the cytoplasm. The catalysed reaction is tRNA(Arg) + L-arginine + ATP = L-arginyl-tRNA(Arg) + AMP + diphosphate. The chain is Arginine--tRNA ligase from Chlorobium phaeovibrioides (strain DSM 265 / 1930) (Prosthecochloris vibrioformis (strain DSM 265)).